Here is a 554-residue protein sequence, read N- to C-terminus: Valerianol synthase TPS1E (554 aa).

2 residues coordinate Mg(2+): aspartate 307 and aspartate 311. The DDXXD motif signature appears at 326–330; sequence VQRWD. Residues aspartate 452, serine 456, and glutamate 460 each coordinate Mg(2+).

The protein belongs to the terpene synthase family. It depends on Mg(2+) as a cofactor.

It catalyses the reaction (2E,6E)-farnesyl diphosphate + H2O = valerianol + diphosphate. The protein operates within secondary metabolite biosynthesis; terpenoid biosynthesis. In terms of biological role, terpene synthase that catalyzes the biosynthesis of the terpene valerianol, which is a volatile compound of floral scent. This Camellia hiemalis (Camellia) protein is Valerianol synthase TPS1E.